The primary structure comprises 221 residues: Ribosomal RNA small subunit methyltransferase G (221 aa).

Residues G85, L90, 138 to 139, and R151 each bind S-adenosyl-L-methionine; that span reads AE.

It belongs to the methyltransferase superfamily. RNA methyltransferase RsmG family.

It is found in the cytoplasm. It carries out the reaction guanosine(527) in 16S rRNA + S-adenosyl-L-methionine = N(7)-methylguanosine(527) in 16S rRNA + S-adenosyl-L-homocysteine. In terms of biological role, specifically methylates the N7 position of guanine in position 527 of 16S rRNA. The chain is Ribosomal RNA small subunit methyltransferase G from Caulobacter sp. (strain K31).